Reading from the N-terminus, the 350-residue chain is Biotin synthase (350 aa).

One can recognise a Radical SAM core domain in the interval 41 to 268; that stretch reads NEVQISRLLS…KSRVRLSAGR (228 aa). 3 residues coordinate [4Fe-4S] cluster: Cys-56, Cys-60, and Cys-63. 4 residues coordinate [2Fe-2S] cluster: Cys-100, Cys-131, Cys-191, and Arg-263.

It belongs to the radical SAM superfamily. Biotin synthase family. Homodimer. It depends on [4Fe-4S] cluster as a cofactor. [2Fe-2S] cluster serves as cofactor.

It catalyses the reaction (4R,5S)-dethiobiotin + (sulfur carrier)-SH + 2 reduced [2Fe-2S]-[ferredoxin] + 2 S-adenosyl-L-methionine = (sulfur carrier)-H + biotin + 2 5'-deoxyadenosine + 2 L-methionine + 2 oxidized [2Fe-2S]-[ferredoxin]. The protein operates within cofactor biosynthesis; biotin biosynthesis; biotin from 7,8-diaminononanoate: step 2/2. Functionally, catalyzes the conversion of dethiobiotin (DTB) to biotin by the insertion of a sulfur atom into dethiobiotin via a radical-based mechanism. This is Biotin synthase from Shewanella piezotolerans (strain WP3 / JCM 13877).